We begin with the raw amino-acid sequence, 1407 residues long: DNA-directed RNA polymerase subunit beta' (1407 aa).

Zn(2+)-binding residues include C70, C72, C85, and C88. Mg(2+) is bound by residues D460, D462, and D464. Zn(2+) contacts are provided by C814, C888, C895, and C898.

It belongs to the RNA polymerase beta' chain family. The RNAP catalytic core consists of 2 alpha, 1 beta, 1 beta' and 1 omega subunit. When a sigma factor is associated with the core the holoenzyme is formed, which can initiate transcription. The cofactor is Mg(2+). Requires Zn(2+) as cofactor.

It catalyses the reaction RNA(n) + a ribonucleoside 5'-triphosphate = RNA(n+1) + diphosphate. In terms of biological role, DNA-dependent RNA polymerase catalyzes the transcription of DNA into RNA using the four ribonucleoside triphosphates as substrates. This chain is DNA-directed RNA polymerase subunit beta', found in Buchnera aphidicola subsp. Acyrthosiphon pisum (strain APS) (Acyrthosiphon pisum symbiotic bacterium).